A 106-amino-acid polypeptide reads, in one-letter code: uncharacterized protein (106 aa).

2 helical membrane passes run Cys43 to Val63 and Ile86 to Phe106.

Its subcellular location is the membrane. This is an uncharacterized protein from Saccharomyces cerevisiae (strain ATCC 204508 / S288c) (Baker's yeast).